The primary structure comprises 128 residues: Prokineticin-2 (128 aa).

The signal sequence occupies residues 1–26; that stretch reads MGDPRCAPLLLLLLLPLLFTPPAGDA. 5 disulfide bridges follow: Cys-33/Cys-45, Cys-39/Cys-57, Cys-44/Cys-106, Cys-67/Cys-114, and Cys-108/Cys-124.

This sequence belongs to the AVIT (prokineticin) family. As to expression, expressed in the SCN and among a few other discrete brain areas, including the islands of Calleja, media l preoptic area of the hypothalamus and the shell of the nucleus accumbens. Highly expressed in testis. In the SCN, expression subjected to high amplitude of circadian oscillation.

Its subcellular location is the secreted. Functionally, may function as an output molecule from the suprachiasmatic nucleus (SCN) that transmits behavioral circadian rhythm. May also function locally within the SCN to synchronize output. Potently contracts gastrointestinal (GI) smooth muscle. The sequence is that of Prokineticin-2 (Prok2) from Mus musculus (Mouse).